The chain runs to 429 residues: Glucose-1-phosphate adenylyltransferase (429 aa).

Alpha-D-glucose 1-phosphate is bound by residues glycine 162, 177-178, and serine 209; that span reads EK.

Belongs to the bacterial/plant glucose-1-phosphate adenylyltransferase family. Homotetramer.

It catalyses the reaction alpha-D-glucose 1-phosphate + ATP + H(+) = ADP-alpha-D-glucose + diphosphate. It functions in the pathway glycan biosynthesis; glycogen biosynthesis. Functionally, involved in the biosynthesis of ADP-glucose, a building block required for the elongation reactions to produce glycogen. Catalyzes the reaction between ATP and alpha-D-glucose 1-phosphate (G1P) to produce pyrophosphate and ADP-Glc. This Picosynechococcus sp. (strain ATCC 27264 / PCC 7002 / PR-6) (Agmenellum quadruplicatum) protein is Glucose-1-phosphate adenylyltransferase.